Consider the following 950-residue polypeptide: UPF0182 protein P9303_14611 (950 aa).

A run of 9 helical transmembrane segments spans residues 20-40 (LLLSIAAFWLLMRVQVEWLWF), 53-73 (WLWQLGGLLLALLVVATCQLW), 102-122 (LLGCFVVVVGDLVLLTRLAWL), 141-161 (IWALVIPLSCVFISICVMLGN), 173-193 (CFCFSISIARGWGLWSLALAI), 209-229 (FGLGQFPALAFALVVLLAQLV), 259-279 (CDVMRPLIGIILLTLSALLWL), 308-328 (SLASLAILVLAFLVIPFPWIQ), and 335-355 (LIASIIGVGAILLEVLLAPFV).

This sequence belongs to the UPF0182 family.

It is found in the cell membrane. In Prochlorococcus marinus (strain MIT 9303), this protein is UPF0182 protein P9303_14611.